The chain runs to 118 residues: UPF0102 protein PC1_0307 (118 aa).

The protein belongs to the UPF0102 family.

In Pectobacterium carotovorum subsp. carotovorum (strain PC1), this protein is UPF0102 protein PC1_0307.